The chain runs to 355 residues: Myricetin 7/4'-O-methyltransferase 2 (355 aa).

S-adenosyl-L-methionine is bound at residue D221. H259 (proton acceptor) is an active-site residue.

This sequence belongs to the class I-like SAM-binding methyltransferase superfamily. Cation-independent O-methyltransferase family. In terms of assembly, homodimer. In terms of tissue distribution, mainly expressed in leaves secreting glandular trichomes types 1 and 4 and, to a lesser extent, in storage trichomes type 6.

It carries out the reaction quercetin + S-adenosyl-L-methionine = rhamnetin + S-adenosyl-L-homocysteine + H(+). The enzyme catalyses kaempferol + S-adenosyl-L-methionine = kaempferide + S-adenosyl-L-homocysteine + H(+). The catalysed reaction is myricetin + S-adenosyl-L-methionine = 7-O-methylmyricetin + S-adenosyl-L-homocysteine + H(+). It catalyses the reaction kaempferide + S-adenosyl-L-methionine = 7,4'-O-dimethylkaempferol + S-adenosyl-L-homocysteine + H(+). It carries out the reaction isorhamnetin + S-adenosyl-L-methionine = 3',4'-O-dimethylquercetin + S-adenosyl-L-homocysteine + 2 H(+). The enzyme catalyses 3',4',5,7-tetrahydroxy-3-methoxyflavone + S-adenosyl-L-methionine = 3',4',5-trihydroxy-3,7-dimethoxyflavone + S-adenosyl-L-homocysteine + H(+). The catalysed reaction is rhamnetin + S-adenosyl-L-methionine = 7,4'-O-dimethylquercetin + S-adenosyl-L-homocysteine + H(+). It catalyses the reaction syringetin + S-adenosyl-L-methionine = 7,3',5'-O-trimethylmyricetin + S-adenosyl-L-homocysteine + H(+). It carries out the reaction 3',4',5'-O-trimethylmyricetin + S-adenosyl-L-methionine = 7,3',4',5'-O-tetramethylmyricetin + S-adenosyl-L-homocysteine. It functions in the pathway flavonoid metabolism. Its function is as follows. Flavonoid 7/4'-O-methyltransferase involved in the biosynthesis of polymethoxylated flavonoids natural products such as myricetin derivatives, aroma compounds possessing antioxidant properties and exhibiting pharmacological activities such as anti-carcinogen, anti-viral, anti-thrombotic, anti-diabetic, anti-atherosclerotic, and anti-inflammatory effects. Catalyzes S-adenosylmethionine-dependent regioselective 7/4'-O-methylation of flavonoids; active on various hydroxylated flavonoid substrates, including myricetin, quercetin and kaempferol. Mediates the formation of 4'-methyl derivatives from kaempferol, 3'-methyl quercetin (isorhamnetin), 7-methyl quercetin (rhamnetin) and 3'-methyl myricetin, producing 4'-methyl kaempferol (kaempferide), 3',4'-dimethyl quercetin (4'-O-methyl isorhamnetin), 7,4'-dimethyl quercetin (4'-O-methyl rhamnetin, rhamnacene) and 3',4'-dimethyl myricetin, respectively. Triggers the 7-O-methylation of quercetin, myricetin, 4'-methyl kaempferol (kaempferide), 3-methyl quercetin, 3',5'-dimethyl myricetin (syringetin) and 3',4',5'-trimethyl myricetin, thus leading to production of 7-methyl quercetin (rhamnetin), 7-methyl myricetin, 7,4'-dimethyl kaempferol (7-O-methyl kaempferide), 3,7-dimethyl quercetin, 7,3',5'-trimethyl myricetin (7-O-methyl syringetin) and 7,3',4',5'-tetramethyl myricetin, respectively. This chain is Myricetin 7/4'-O-methyltransferase 2, found in Solanum habrochaites (Wild tomato).